Here is a 376-residue protein sequence, read N- to C-terminus: MKIKKIKLLKALALTGAFGIVATVPVIVSSCSSTDNNGGTGDNNTGGGGSGTDQQQGTTYTPAIKSDVTLSGALSKIYDTTNTGDSRKNTNTLIAEDIKANPENYFTNGEDLKKVEGWSVTVDGSFDSNSVWTGDAYSKWSAVADTHKGVYKSTSKQLNINSLKDLKSQLDTSAKIKAICDESNLVFSTADADSYKIQNELGFTGGDLLHINVTATQAGKTLNMDLGIPVSDLNLKITDLKVSVTASNNSTGNNVAAVSDLTTNFTYNIGIKEEVTAPTEKPNLAKTDKGEVMKVLKALGYTQTGDETKLDNDKVSNSLGLYNCEFTAVSATPVEGSEDKFTIKLKAKPLTDYVWEDGTNTEKEISFEATFTMTGN.

The N-terminal stretch at 1-30 is a signal peptide; that stretch reads MKIKKIKLLKALALTGAFGIVATVPVIVSS. C31 carries N-palmitoyl cysteine lipidation. Residue C31 is the site of S-diacylglycerol cysteine attachment. The disordered stretch occupies residues 33–59; sequence STDNNGGTGDNNTGGGGSGTDQQQGTT. Positions 38–51 are enriched in gly residues; that stretch reads GGTGDNNTGGGGSG.

The protein belongs to the p35 lipoprotein family.

Its subcellular location is the cell membrane. In Malacoplasma penetrans (strain HF-2) (Mycoplasma penetrans), this protein is Lipoprotein p33.